Consider the following 472-residue polypeptide: TBC domain-containing protein C23D3.03c (472 aa).

In terms of domain architecture, Rab-GAP TBC spans G215–E418.

This Schizosaccharomyces pombe (strain 972 / ATCC 24843) (Fission yeast) protein is TBC domain-containing protein C23D3.03c.